Here is a 336-residue protein sequence, read N- to C-terminus: Protein ABHD13 (336 aa).

Residues 37-57 form a helical; Signal-anchor for type II membrane protein membrane-spanning segment; sequence FNMYGGVILLLLIFVSIAGIL. Residues Ser-193, Asp-268, and His-298 each act as charge relay system in the active site. N-linked (GlcNAc...) asparagine glycosylation occurs at Asn-299.

The protein belongs to the serine esterase family.

It localises to the membrane. This Xenopus laevis (African clawed frog) protein is Protein ABHD13.